A 247-amino-acid chain; its full sequence is UPF0309 protein Lm4b_02611 (247 aa).

The 184-residue stretch at 31–214 folds into the SIS domain; the sequence is VAESIENDGV…ETMVNDNFTP (184 aa).

The protein belongs to the UPF0309 family.

In Listeria monocytogenes serotype 4b (strain CLIP80459), this protein is UPF0309 protein Lm4b_02611.